Here is a 398-residue protein sequence, read N- to C-terminus: Phospholipase C (398 aa).

The signal sequence occupies residues 1 to 28; the sequence is MKKKFLKGLCCAFVISITCLGASSKAYG. The Zn(2+) site is built by Trp29, His39, Asp84, His96, His154, Asp158, His164, His176, and Glu180. Residues 29–278 form the Zn-dependent PLC domain; that stretch reads WDGKKDGTGT…YDVSKDLLPT (250 aa). Residues 275 to 283 form a linker region; that stretch reads LLPTENHKI. The 115-residue stretch at 284 to 398 folds into the PLAT domain; sequence NGLMVVIKTA…IHGNEKYYIN (115 aa). Ca(2+) contacts are provided by Gly299, Thr300, Asp301, Asp321, Asn322, Gly324, Asn325, Asp326, and Asp364.

This sequence belongs to the bacterial zinc-metallophospholipase C family. Ca(2+) serves as cofactor. It depends on Zn(2+) as a cofactor.

Its subcellular location is the secreted. The enzyme catalyses a 1,2-diacyl-sn-glycero-3-phosphocholine + H2O = phosphocholine + a 1,2-diacyl-sn-glycerol + H(+). Bacterial hemolysins are exotoxins that attack blood cell membranes and cause cell rupture. Binds to eukaryotic membranes where it hydrolyzes phosphatidylcholine, sphingomyelin and phosphatidylethanolamine. The diacylglycerol produced can activate both the arachidonic acid pathway, leading to modulation of the inflammatory response cascade and thrombosis, and protein kinase C, leading to activation of eukaryotic phospholipases and further membrane damage. This enzyme is hemolytic against horse erythrocytes. This Clostridium novyi protein is Phospholipase C (plc).